The chain runs to 421 residues: Gamma-glutamyl phosphate reductase (421 aa).

It belongs to the gamma-glutamyl phosphate reductase family.

It is found in the cytoplasm. It catalyses the reaction L-glutamate 5-semialdehyde + phosphate + NADP(+) = L-glutamyl 5-phosphate + NADPH + H(+). It participates in amino-acid biosynthesis; L-proline biosynthesis; L-glutamate 5-semialdehyde from L-glutamate: step 2/2. Functionally, catalyzes the NADPH-dependent reduction of L-glutamate 5-phosphate into L-glutamate 5-semialdehyde and phosphate. The product spontaneously undergoes cyclization to form 1-pyrroline-5-carboxylate. The sequence is that of Gamma-glutamyl phosphate reductase from Acinetobacter baumannii (strain AYE).